A 139-amino-acid chain; its full sequence is CLAVATA3/ESR (CLE)-related protein 1 (139 aa).

Positions 1–22 (MPNIFKILLIVLLAVVSFRLSA) are cleaved as a signal peptide. The required for secretion from the host cytoplasm to the host apoplasm stretch occupies residues 23–90 (STGDKKTAND…VPSHLTNRSM (68 aa)). Asn-37 and Asn-87 each carry an N-linked (GlcNAc...) asparagine glycan. Positions 66–139 (AIGRSNAQGG…SPSGPDPHHH (74 aa)) are disordered. Positions 100–125 (EKGAATRVEKMRAQLRELAEKMTDKD) form a coiled coil. Residues 106–128 (RVEKMRAQLRELAEKMTDKDPKR) show a composition bias toward basic and acidic residues. Positions 128–139 (RLSPSGPDPHHH) match the CLE motif.

This sequence belongs to the CLV3/ESR signal peptide family. In terms of tissue distribution, highly expressed exclusively within the dorsal esophageal gland cell during syncytium formation in host plants (at protein level).

The protein localises to the secreted. Its subcellular location is the host cytoplasm. The protein resides in the host extracellular space. It is found in the extracellular space. It localises to the apoplast. Mimics host plant CLE extracellular signal peptides that regulate cell fate. May play a role in the differentiation or division of feeding cells (syncytia) induced in plant roots during infection. The chain is CLAVATA3/ESR (CLE)-related protein 1 (CLE1) from Heterodera glycines (Soybean cyst nematode worm).